A 610-amino-acid chain; its full sequence is Menin (610 aa).

The tract at residues 214-390 (GVAERSWLYL…SLLEAGEERP (177 aa)) is interaction with FANCD2. 2 disordered regions span residues 385 to 404 (AGEE…GSAL) and 460 to 552 (REAE…PVLT). Residues 393 to 402 (QTQGTQSQGS) show a composition bias toward low complexity. The segment covering 484 to 500 (RRESKPEEPPPPKKPAL) has biased composition (basic and acidic residues). At S487 the chain carries Phosphoserine. Composition is skewed to pro residues over residues 512 to 521 (PGPPRKPPGT) and 537 to 548 (VPAPAASPPPEG). S543 carries the post-translational modification Phosphoserine. A Phosphothreonine modification is found at T594.

As to quaternary structure, component of the MLL-HCF complex, at least composed of KMT2A/MLL1, MEN1, ASH2L, RBBP5, DPY30, WDR5, HCFC1 and HCFC2. Component of the menin-associated histone methyltransferase complex, at least composed of KMT2B/MLL4, MEN1, ASH2L, RBBP5, DPY30 and WDR5. Interacts with POLR2B. Interacts with POLR2A phosphorylated at 'Ser-5', but not with the unphosphorylated, nor 'Ser-2' phosphorylated POLR2A forms. Interacts with FANCD2 and DBF4. Interacts with SMAD3, but not with SMAD2, nor SMAD4. Directly interacts with NFKB1, NFKB2 and RELA. Interacts with JUND (via MBM motif); inhibits the interaction of JUND with MAPK10 and the phosphorylation of JUND by MAP kinases MAPK8 and MAPK10. Interacts with KMT2A (via MBM motif). The KMT2A-MEN1 complex interacts with PSIP1 with a greater affinity as MEN1 enhances interaction of KMT2A with PSIP1.

The protein localises to the nucleus. Functionally, essential component of a MLL/SET1 histone methyltransferase (HMT) complex, a complex that specifically methylates 'Lys-4' of histone H3 (H3K4). Functions as a transcriptional regulator. Binds to the TERT promoter and represses telomerase expression. Plays a role in TGFB1-mediated inhibition of cell-proliferation, possibly regulating SMAD3 transcriptional activity. Represses JUND-mediated transcriptional activation on AP1 sites, as well as that mediated by NFKB subunit RELA. Positively regulates HOXC8 and HOXC6 gene expression. May be involved in normal hematopoiesis through the activation of HOXA9 expression. May be involved in DNA repair. This chain is Menin (MEN1), found in Bos taurus (Bovine).